A 473-amino-acid chain; its full sequence is ATP synthase subunit beta (473 aa).

158 to 165 (GGAGVGKT) lines the ATP pocket.

The protein belongs to the ATPase alpha/beta chains family. As to quaternary structure, F-type ATPases have 2 components, CF(1) - the catalytic core - and CF(0) - the membrane proton channel. CF(1) has five subunits: alpha(3), beta(3), gamma(1), delta(1), epsilon(1). CF(0) has three main subunits: a(1), b(2) and c(9-12). The alpha and beta chains form an alternating ring which encloses part of the gamma chain. CF(1) is attached to CF(0) by a central stalk formed by the gamma and epsilon chains, while a peripheral stalk is formed by the delta and b chains.

Its subcellular location is the cell membrane. It carries out the reaction ATP + H2O + 4 H(+)(in) = ADP + phosphate + 5 H(+)(out). Functionally, produces ATP from ADP in the presence of a proton gradient across the membrane. The catalytic sites are hosted primarily by the beta subunits. This is ATP synthase subunit beta from Bacillus licheniformis (strain ATCC 14580 / DSM 13 / JCM 2505 / CCUG 7422 / NBRC 12200 / NCIMB 9375 / NCTC 10341 / NRRL NRS-1264 / Gibson 46).